The primary structure comprises 98 residues: Integration host factor subunit alpha (98 aa).

Residues 49–70 (FGNFDLRDKNQRPGRNPKTGED) form a disordered region.

This sequence belongs to the bacterial histone-like protein family. As to quaternary structure, heterodimer of an alpha and a beta chain.

In terms of biological role, this protein is one of the two subunits of integration host factor, a specific DNA-binding protein that functions in genetic recombination as well as in transcriptional and translational control. The polypeptide is Integration host factor subunit alpha (Shewanella baltica (strain OS223)).